The sequence spans 832 residues: Protein monoglycylase TTLL8 (832 aa).

The span at 1–13 shows a compositional bias: pro residues; sequence MSCPPTPNPPFRP. Disordered regions lie at residues 1 to 84 and 277 to 304; these read MSCP…QDLS and GKSKKEEAKNSDPSPKKDPENPDLKLPS. 3 stretches are compositionally biased toward basic and acidic residues: residues 46-59, 66-75, and 280-299; these read QLREASMENGERKK, DGDHKEENKL, and KKEEAKNSDPSPKKDPENPD. Residues 271 to 624 form the TTL domain; the sequence is YCSKVKGKSK…RKLDRNCDIG (354 aa). ATP is bound by residues Lys-397, 403–404, 435–438, 448–450, and 492–493; these read RG, QKYI, KFD, and CN. Residue Arg-403 coordinates a protein. Ser-495 is an L-glutamate binding site. The Mg(2+) site is built by Asp-570, Glu-583, and Asn-585. Glu-583 lines the ATP pocket.

Mg(2+) serves as cofactor. Highly expressed in testis. Expressed in brain, heart, kidney, liver, lung, muscle, spleen and trachea. Expressed in sperm flagellum. In the brain, specifically expressed in ependymal cilia.

The protein localises to the cytoplasm. The protein resides in the cytoskeleton. It is found in the cell projection. Its subcellular location is the cilium. It localises to the cilium axoneme. The protein localises to the flagellum axoneme. The enzyme catalyses L-glutamyl-[protein] + glycine + ATP = glycyl-L-glutamyl-[protein] + ADP + phosphate + H(+). Its function is as follows. Monoglycylase which modifies both tubulin and non-tubulin proteins, adding a single glycine on the gamma-carboxyl groups of specific glutamate residues to generate monoglycine side chains within the C-terminal tail of target proteins. Not involved in elongation step of the polyglycylation reaction. Preferentially monoglycylates alpha-tubulin over beta-tubulin. Together with TTLL3, mediates microtubule glycylation of primary and motile cilia, which is essential for their stability and maintenance. Together with TTLL3, glycylates sperm flagella which regulates axonemal dynein motor activity, thereby controlling flagellar beat, directional sperm swimming and male fertility. Monoglycylates non-tubulin proteins such as ANP32A, ANP32B, SET, NCL and NAP1. The polypeptide is Protein monoglycylase TTLL8 (Mus musculus (Mouse)).